We begin with the raw amino-acid sequence, 140 residues long: uncharacterized protein (140 aa).

A run of 2 helical transmembrane segments spans residues 4 to 21 (ILKI…YLFG) and 26 to 48 (LVKV…SGYL).

It belongs to the bacteriophage holin family. Cp-1 holin subfamily.

The protein resides in the cell membrane. This is an uncharacterized protein from Listeria innocua serovar 6a (strain ATCC BAA-680 / CLIP 11262).